The following is a 420-amino-acid chain: UDP-glucuronic acid decarboxylase 1 (420 aa).

Position 1 is an N-acetylmethionine (Met-1). At 1–19 the chain is on the cytoplasmic side; sequence MVSKGLLRLVSSVNRRKMK. A helical; Signal-anchor for type II membrane protein membrane pass occupies residues 20–40; the sequence is LLLGIALFAYAASVWGNFVNM. The Lumenal segment spans residues 41–420; the sequence is RSIQENGELK…RVKKGRTRHS (380 aa). Phosphothreonine is present on Thr-94. 10 residues coordinate NAD(+): Gly-98, Phe-99, Val-100, Asp-119, Asn-120, Phe-122, Thr-123, Gly-124, Asp-144, and Val-145. Residues Leu-149 and Tyr-150 each contribute to the UDP-alpha-D-glucuronate site. Residues Leu-159 and Ser-161 each contribute to the NAD(+) site. Lys-177 provides a ligand contact to UDP-alpha-D-glucuronate. Thr-178 contacts NAD(+). UDP-alpha-D-glucuronate contacts are provided by Asn-185, Gly-188, Lys-191, and Arg-192. Ala-200, Tyr-231, and Lys-235 together coordinate NAD(+). Tyr-231 serves as the catalytic Proton acceptor. The UDP-alpha-D-glucuronate site is built by Tyr-245, Gln-248, and Glu-249. Residues Thr-261, His-267, and Arg-272 each contribute to the NAD(+) site. An N-linked (GlcNAc...) asparagine glycan is attached at Asn-316.

It belongs to the NAD(P)-dependent epimerase/dehydratase family. UDP-glucuronic acid decarboxylase subfamily. Homodimer and homotetramer. Interacts with AKT1. NAD(+) is required as a cofactor. In terms of tissue distribution, ubiquitous. Detected in heart, brain, spleen, lung, testis, liver, skeletal muscle and kidney.

The protein localises to the golgi apparatus. It is found in the golgi stack membrane. The catalysed reaction is UDP-alpha-D-glucuronate + H(+) = UDP-alpha-D-xylose + CO2. Its pathway is nucleotide-sugar biosynthesis; UDP-alpha-D-xylose biosynthesis; UDP-alpha-D-xylose from UDP-alpha-D-glucuronate: step 1/1. Its function is as follows. Catalyzes the NAD-dependent decarboxylation of UDP-glucuronic acid to UDP-xylose. Necessary for the biosynthesis of the core tetrasaccharide in glycosaminoglycan biosynthesis. In Rattus norvegicus (Rat), this protein is UDP-glucuronic acid decarboxylase 1.